The sequence spans 139 residues: Transcription antitermination protein NusB (139 aa).

It belongs to the NusB family.

Involved in transcription antitermination. Required for transcription of ribosomal RNA (rRNA) genes. Binds specifically to the boxA antiterminator sequence of the ribosomal RNA (rrn) operons. This is Transcription antitermination protein NusB from Erwinia tasmaniensis (strain DSM 17950 / CFBP 7177 / CIP 109463 / NCPPB 4357 / Et1/99).